A 496-amino-acid polypeptide reads, in one-letter code: Stomatal closure-related actin-binding protein 1 (496 aa).

The stretch at 126–269 forms a coiled coil; the sequence is RNKDDVEEAI…FLQLQKKLAM (144 aa).

This sequence belongs to the SCAB family. As to quaternary structure, dimer. Dimerization is required for actin-binding activity. As to expression, expressed in roots, stems, leaves, flowers, siliques and guard cells.

The protein resides in the cytoplasm. The protein localises to the cytoskeleton. In terms of biological role, plant-specific actin binding protein that bundles and stabilizes microfilaments (MFs). Has no nucleation or capping activity. Regulates MF reorganization during stomatal closure. The binding to F-actin is insensitive to Ca(2+) and pH. Binds weakly to inositol phosphates. The protein is Stomatal closure-related actin-binding protein 1 of Arabidopsis thaliana (Mouse-ear cress).